Reading from the N-terminus, the 417-residue chain is Testis-specific Y-encoded-like protein 5 (417 aa).

A compositionally biased stretch (basic residues) spans 1–25 (MSGRSRGRKSSRAKNRGKGRAKARV). Disordered regions lie at residues 1 to 55 (MSGR…QVQA), 93 to 112 (AAGD…AASL), 127 to 202 (GTVG…EGSM), and 391 to 417 (KGKE…SQSN). Basic and acidic residues predominate over residues 27–37 (PAPDDAPRDPD). Residues 93–103 (AAGDHGQAAAR) are compositionally biased toward low complexity. Basic and acidic residues predominate over residues 182 to 191 (GEEKKEERDA). Residues 406 to 417 (METTQPGVSQSN) show a composition bias toward polar residues.

It belongs to the nucleosome assembly protein (NAP) family. As to quaternary structure, interacts with USP7.

Functionally, involved in modulation of cell growth and cellular response to gamma radiation probably via regulation of the Akt signaling pathway. Involved in regulation of p53/TP53. Suppresses p53/TP53 protein levels and promotes its ubiquitination; the function is dependent on USP7 and independent on MDM2. Proposed to displace p53/TP53 from interaction with USP7. The chain is Testis-specific Y-encoded-like protein 5 (TSPYL5) from Homo sapiens (Human).